Reading from the N-terminus, the 283-residue chain is Thymidylate synthase (283 aa).

Arg-22 is a dUMP binding site. The active-site Nucleophile is Cys-160. DUMP is bound by residues 180-183, Asn-191, and 221-223; these read RSCD and HIY. Asp-183 serves as a coordination point for (6R)-5,10-methylene-5,6,7,8-tetrahydrofolate. Ser-282 lines the (6R)-5,10-methylene-5,6,7,8-tetrahydrofolate pocket.

Belongs to the thymidylate synthase family. Bacterial-type ThyA subfamily. As to quaternary structure, homodimer.

The protein resides in the cytoplasm. It catalyses the reaction dUMP + (6R)-5,10-methylene-5,6,7,8-tetrahydrofolate = 7,8-dihydrofolate + dTMP. It functions in the pathway pyrimidine metabolism; dTTP biosynthesis. Functionally, catalyzes the reductive methylation of 2'-deoxyuridine-5'-monophosphate (dUMP) to 2'-deoxythymidine-5'-monophosphate (dTMP) while utilizing 5,10-methylenetetrahydrofolate (mTHF) as the methyl donor and reductant in the reaction, yielding dihydrofolate (DHF) as a by-product. This enzymatic reaction provides an intracellular de novo source of dTMP, an essential precursor for DNA biosynthesis. In Pasteurella multocida (strain Pm70), this protein is Thymidylate synthase.